A 670-amino-acid polypeptide reads, in one-letter code: Polar flagellar hook-associated protein 2 (670 aa).

The segment at 226–300 (PLQAPQQPDQ…RSSLRPEERI (75 aa)) is disordered. The span at 257–266 (AQDDAQDDAS) shows a compositional bias: acidic residues. Residues 272 to 283 (AAGAEAAKAGQE) show a composition bias toward low complexity. Over residues 284–300 (AIDKANQRSSLRPEERI) the composition is skewed to basic and acidic residues. Residues 342–428 (GTLTDSYVTT…AQSSFEEYLG (87 aa)) are a coiled coil.

Belongs to the FliD family. Homopentamer.

The protein localises to the secreted. Its subcellular location is the bacterial flagellum. In terms of biological role, required for the morphogenesis and for the elongation of the flagellar filament by facilitating polymerization of the flagellin monomers at the tip of growing filament. Forms a capping structure, which prevents flagellin subunits (transported through the central channel of the flagellum) from leaking out without polymerization at the distal end. Important for swimming motility. This is Polar flagellar hook-associated protein 2 (fliDP) from Vibrio parahaemolyticus serotype O3:K6 (strain RIMD 2210633).